The sequence spans 95 residues: Nickel-cobalt-cadmium resistance protein NccY (95 aa).

To A.eutrophus CnrY.

In terms of biological role, component of the NCC cation-efflux system that confers resistance to nickel, cobalt and cadmium. May be involved in the regulation of NCC. This chain is Nickel-cobalt-cadmium resistance protein NccY (nccY), found in Alcaligenes xylosoxydans xylosoxydans (Achromobacter xylosoxidans).